Reading from the N-terminus, the 162-residue chain is Caveolin-2 (162 aa).

Over 1 to 86 (MGLETEKADV…FEISKYVIYK (86 aa)) the chain is Cytoplasmic. Phosphotyrosine; by SRC is present on tyrosine 19. Serine 20 and serine 23 each carry phosphoserine. The residue at position 27 (tyrosine 27) is a Phosphotyrosine; by SRC. Serine 36 carries the post-translational modification Phosphoserine. The segment at residues 87-107 (FLTVFLAIPLAFTAGILFATL) is an intramembrane region (helical). Over 108–162 (SCLHIWIIMPFVKTCLMVLPSVQTIWRSVTDVIIAPLCTSIGRICSSVSLQVSHD) the chain is Cytoplasmic.

This sequence belongs to the caveolin family. In terms of assembly, monomer or homodimer. Interacts with CAV1; the interaction forms a stable heterooligomeric complex that is required for targeting to lipid rafts and for caveolae formation. Tyrosine phosphorylated forms do not form heterooligomers with the Tyr-19-phosphorylated form existing as a monomer or dimer, and the Tyr-27-form as a monomer only. Interacts (tyrosine phosphorylated form) with the SH2 domain-containing proteins, RASA1, NCK1 and SRC. Interacts (tyrosine phosphorylated form) with INSR, the interaction (Tyr-27-phosphorylated form) is increased on insulin stimulation. Interacts (Tyr-19 phosphorylated form) with MAPK1 (phosphorylated form); the interaction, promoted by insulin, leads to nuclear location and MAPK1 activation. Interacts with STAT3; the interaction is increased on insulin-induced tyrosine phosphorylation leading to STAT activation. In terms of processing, phosphorylated on serine and tyrosine residues. CAV1 promotes phosphorylation on Ser-23 which then targets the complex to the plasma membrane, lipid rafts and caveolae. Phosphorylation on Ser-36 appears to modulate mitosis in endothelial cells. Phosphorylation on both Tyr-19 and Tyr-27 is required for insulin-induced 'Ser-727' phosphorylation of STAT3 and its activation. Phosphorylation on Tyr-19 is required for insulin-induced phosphorylation of MAPK1 and DNA binding of STAT3. Tyrosine phosphorylation is induced by both EGF and insulin (By. similarity).

The protein resides in the nucleus. It localises to the cytoplasm. It is found in the golgi apparatus membrane. The protein localises to the cell membrane. Its subcellular location is the membrane. The protein resides in the caveola. In terms of biological role, may act as a scaffolding protein within caveolar membranes. Interacts directly with G-protein alpha subunits and can functionally regulate their activity. Acts as an accessory protein in conjunction with CAV1 in targeting to lipid rafts and driving caveolae formation. The Ser-36 phosphorylated form has a role in modulating mitosis in endothelial cells. Positive regulator of cellular mitogenesis of the MAPK signaling pathway. Required for the insulin-stimulated nuclear translocation and activation of MAPK1 and STAT3, and the subsequent regulation of cell cycle progression. This chain is Caveolin-2 (CAV2), found in Atelerix albiventris (Middle-African hedgehog).